The primary structure comprises 212 residues: Thiamine-phosphate synthase (212 aa).

4-amino-2-methyl-5-(diphosphooxymethyl)pyrimidine-binding positions include 41 to 45 (QYREK) and D76. 2 residues coordinate Mg(2+): D77 and D96. Position 114 (S114) interacts with 4-amino-2-methyl-5-(diphosphooxymethyl)pyrimidine. Residue 141–143 (TTS) participates in 2-[(2R,5Z)-2-carboxy-4-methylthiazol-5(2H)-ylidene]ethyl phosphate binding. K144 provides a ligand contact to 4-amino-2-methyl-5-(diphosphooxymethyl)pyrimidine. 2-[(2R,5Z)-2-carboxy-4-methylthiazol-5(2H)-ylidene]ethyl phosphate contacts are provided by residues G172 and 192–193 (IS).

The protein belongs to the thiamine-phosphate synthase family. Mg(2+) is required as a cofactor.

The catalysed reaction is 2-[(2R,5Z)-2-carboxy-4-methylthiazol-5(2H)-ylidene]ethyl phosphate + 4-amino-2-methyl-5-(diphosphooxymethyl)pyrimidine + 2 H(+) = thiamine phosphate + CO2 + diphosphate. It catalyses the reaction 2-(2-carboxy-4-methylthiazol-5-yl)ethyl phosphate + 4-amino-2-methyl-5-(diphosphooxymethyl)pyrimidine + 2 H(+) = thiamine phosphate + CO2 + diphosphate. The enzyme catalyses 4-methyl-5-(2-phosphooxyethyl)-thiazole + 4-amino-2-methyl-5-(diphosphooxymethyl)pyrimidine + H(+) = thiamine phosphate + diphosphate. The protein operates within cofactor biosynthesis; thiamine diphosphate biosynthesis; thiamine phosphate from 4-amino-2-methyl-5-diphosphomethylpyrimidine and 4-methyl-5-(2-phosphoethyl)-thiazole: step 1/1. Condenses 4-methyl-5-(beta-hydroxyethyl)thiazole monophosphate (THZ-P) and 2-methyl-4-amino-5-hydroxymethyl pyrimidine pyrophosphate (HMP-PP) to form thiamine monophosphate (TMP). The chain is Thiamine-phosphate synthase from Leuconostoc citreum (strain KM20).